We begin with the raw amino-acid sequence, 911 residues long: Nitrate reductase [NADH], clone PBNBR1405 (911 aa).

The disordered stretch occupies residues 1–68 (MATSVDNRHY…RFDSSDDEDE (68 aa)). Residues 49–62 (KSVDKTTKEDRFDS) are compositionally biased toward basic and acidic residues. Cysteine 191 contacts Mo-molybdopterin. Positions 539 to 614 (SKMYSMSEVR…LEDYRIGELI (76 aa)) constitute a Cytochrome b5 heme-binding domain. Residues histidine 574 and histidine 597 each contribute to the heme site. Residues 654 to 766 (REKVPVKLIE…KGPLGHIEYQ (113 aa)) enclose the FAD-binding FR-type domain. FAD is bound by residues 706–709 (RAYT), 723–727 (VIKVY), phenylalanine 728, phenylalanine 735, 740–742 (LMS), and threonine 793.

This sequence belongs to the nitrate reductase family. As to quaternary structure, homodimer. Requires FAD as cofactor. It depends on heme as a cofactor. Mo-molybdopterin is required as a cofactor.

The enzyme catalyses nitrite + NAD(+) + H2O = nitrate + NADH + H(+). Nitrate reductase is a key enzyme involved in the first step of nitrate assimilation in plants, fungi and bacteria. The chain is Nitrate reductase [NADH], clone PBNBR1405 (NIA1) from Brassica napus (Rape).